Here is a 358-residue protein sequence, read N- to C-terminus: 3-dehydroquinate synthase (358 aa).

NAD(+) is bound by residues 70-75 (DGEAHK), 104-108 (GVIGD), 128-129 (TT), Lys-141, and Lys-150. Zn(2+) is bound by residues Glu-183, His-246, and His-263.

This sequence belongs to the sugar phosphate cyclases superfamily. Dehydroquinate synthase family. Requires NAD(+) as cofactor. The cofactor is Co(2+). Zn(2+) is required as a cofactor.

The protein localises to the cytoplasm. It carries out the reaction 7-phospho-2-dehydro-3-deoxy-D-arabino-heptonate = 3-dehydroquinate + phosphate. It participates in metabolic intermediate biosynthesis; chorismate biosynthesis; chorismate from D-erythrose 4-phosphate and phosphoenolpyruvate: step 2/7. Its function is as follows. Catalyzes the conversion of 3-deoxy-D-arabino-heptulosonate 7-phosphate (DAHP) to dehydroquinate (DHQ). This Bordetella bronchiseptica (strain ATCC BAA-588 / NCTC 13252 / RB50) (Alcaligenes bronchisepticus) protein is 3-dehydroquinate synthase.